A 150-amino-acid polypeptide reads, in one-letter code: Cytochrome c-type biogenesis protein CcmE (150 aa).

The Cytoplasmic portion of the chain corresponds to 1–7 (MTRKQKR). The chain crosses the membrane as a helical; Signal-anchor for type II membrane protein span at residues 8–28 (LAIIGGGVGFLTAAVLLVMFA). Over 29–150 (FSQAVAYFYV…VTLGGKENIQ (122 aa)) the chain is Periplasmic. 2 residues coordinate heme: His-123 and Tyr-127.

The protein belongs to the CcmE/CycJ family.

The protein resides in the cell inner membrane. In terms of biological role, heme chaperone required for the biogenesis of c-type cytochromes. Transiently binds heme delivered by CcmC and transfers the heme to apo-cytochromes in a process facilitated by CcmF and CcmH. The chain is Cytochrome c-type biogenesis protein CcmE from Sinorhizobium fredii (strain NBRC 101917 / NGR234).